The sequence spans 371 residues: 3-isopropylmalate dehydrogenase (371 aa).

Phosphothreonine is present on T55. 78–89 (GPEWTNPNCRPE) lines the NAD(+) pocket. Substrate-binding residues include R96, R106, R135, and D224. 3 residues coordinate Mg(2+): D224, D249, and D253. 290 to 302 (GSAPDIAGKGIVN) is a binding site for NAD(+).

The protein belongs to the isocitrate and isopropylmalate dehydrogenases family. As to quaternary structure, homodimer. It depends on Mg(2+) as a cofactor. The cofactor is Mn(2+).

It is found in the cytoplasm. The catalysed reaction is (2R,3S)-3-isopropylmalate + NAD(+) = 4-methyl-2-oxopentanoate + CO2 + NADH. It functions in the pathway amino-acid biosynthesis; L-leucine biosynthesis; L-leucine from 3-methyl-2-oxobutanoate: step 3/4. Functionally, catalyzes the oxidation of 3-carboxy-2-hydroxy-4-methylpentanoate (3-isopropylmalate) to 3-carboxy-4-methyl-2-oxopentanoate. The product decarboxylates to 4-methyl-2 oxopentanoate. In Schizosaccharomyces pombe (strain 972 / ATCC 24843) (Fission yeast), this protein is 3-isopropylmalate dehydrogenase (leu1).